Here is a 439-residue protein sequence, read N- to C-terminus: Xylose isomerase (439 aa).

Residues His-101 and Asp-104 contribute to the active site. Mg(2+) contacts are provided by Glu-232, Glu-268, His-271, Asp-296, Asp-307, Asp-309, and Asp-339.

Belongs to the xylose isomerase family. In terms of assembly, homotetramer. The cofactor is Mg(2+).

It is found in the cytoplasm. It carries out the reaction alpha-D-xylose = alpha-D-xylulofuranose. In Haemophilus influenzae (strain PittGG), this protein is Xylose isomerase.